Consider the following 115-residue polypeptide: Large ribosomal subunit protein uL22 (115 aa).

The protein belongs to the universal ribosomal protein uL22 family. As to quaternary structure, part of the 50S ribosomal subunit.

Its function is as follows. This protein binds specifically to 23S rRNA; its binding is stimulated by other ribosomal proteins, e.g. L4, L17, and L20. It is important during the early stages of 50S assembly. It makes multiple contacts with different domains of the 23S rRNA in the assembled 50S subunit and ribosome. Functionally, the globular domain of the protein is located near the polypeptide exit tunnel on the outside of the subunit, while an extended beta-hairpin is found that lines the wall of the exit tunnel in the center of the 70S ribosome. The chain is Large ribosomal subunit protein uL22 from Lactococcus lactis subsp. lactis (strain IL1403) (Streptococcus lactis).